The primary structure comprises 93 residues: Auxin-responsive protein SAUR26 (93 aa).

This sequence belongs to the ARG7 family. In terms of assembly, interacts with PP2C-D1. Higher expression in thermo-responsive cultivars (e.g. cv. Alst-1, cv. Ang-0 and cv. Com-0) than in low thermo-responsive cultivars (e.g. cv. Dja-1, cv. El-0 and cv. Kon).

Its subcellular location is the cell membrane. Its function is as follows. Provide a mechanistic link between auxin and plasma membrane H(+)-ATPases (PM H(+)-ATPases, e.g. AHA1 and AHA2), and triggers PM H(+)-ATPases activity by promoting phosphorylation of their C-terminal autoinhibitory domain as a result of PP2C-D subfamily of type 2C phosphatases inhibition, thus leading to the acidification of the apoplast and the facilitation of solutes and water uptake to drive cell expansion. Functions as a positive effectors of cell expansion through modulation of auxin transport. Involved in thermo-responsiveness of plant architecture. Enhances plasma membrane H(+)-ATPase. Probably involved in light intensity mediated root development. This chain is Auxin-responsive protein SAUR26, found in Arabidopsis thaliana (Mouse-ear cress).